The primary structure comprises 810 residues: Glycerol-3-phosphate acyltransferase (810 aa).

The short motif at 305-310 (CHRSHI) is the HXXXXD motif element.

The protein belongs to the GPAT/DAPAT family.

Its subcellular location is the cell inner membrane. The enzyme catalyses sn-glycerol 3-phosphate + an acyl-CoA = a 1-acyl-sn-glycero-3-phosphate + CoA. It functions in the pathway phospholipid metabolism; CDP-diacylglycerol biosynthesis; CDP-diacylglycerol from sn-glycerol 3-phosphate: step 1/3. The chain is Glycerol-3-phosphate acyltransferase from Haemophilus influenzae (strain PittEE).